Here is a 215-residue protein sequence, read N- to C-terminus: Cytochrome b6 (215 aa).

The chain crosses the membrane as a helical span at residues 32–52 (IFYCLGGITLVCFLIQFATGF). Heme c is bound at residue C35. Heme b is bound by residues H86 and H100. Transmembrane regions (helical) follow at residues 90 to 110 (ASMM…TGGF), 116 to 136 (LTWV…VTGY), and 186 to 206 (AHTF…FLMI). Heme b contacts are provided by H187 and H202.

It belongs to the cytochrome b family. PetB subfamily. In terms of assembly, the 4 large subunits of the cytochrome b6-f complex are cytochrome b6, subunit IV (17 kDa polypeptide, PetD), cytochrome f and the Rieske protein, while the 4 small subunits are PetG, PetL, PetM and PetN. The complex functions as a dimer. The cofactor is heme b. Requires heme c as cofactor.

Its subcellular location is the cellular thylakoid membrane. Component of the cytochrome b6-f complex, which mediates electron transfer between photosystem II (PSII) and photosystem I (PSI), cyclic electron flow around PSI, and state transitions. In Trichormus variabilis (strain ATCC 29413 / PCC 7937) (Anabaena variabilis), this protein is Cytochrome b6.